Reading from the N-terminus, the 314-residue chain is Malate dehydrogenase (314 aa).

NAD(+)-binding positions include 13-18 (GGGQIG) and Asp37. The substrate site is built by Arg88 and Arg94. NAD(+) is bound by residues Asn101 and 124-126 (VAN). 2 residues coordinate substrate: Asn126 and Arg157. Residue His181 is the Proton acceptor of the active site.

The protein belongs to the LDH/MDH superfamily. MDH type 3 family.

The enzyme catalyses (S)-malate + NAD(+) = oxaloacetate + NADH + H(+). Its function is as follows. Catalyzes the reversible oxidation of malate to oxaloacetate. In Myxococcus xanthus, this protein is Malate dehydrogenase.